The sequence spans 302 residues: Homoserine O-acetyltransferase (302 aa).

C142 functions as the Acyl-thioester intermediate in the catalytic mechanism. Residues K163 and S192 each coordinate substrate. H235 functions as the Proton acceptor in the catalytic mechanism. Residue E237 is part of the active site. Residue R249 participates in substrate binding.

The protein belongs to the MetA family.

It localises to the cytoplasm. It carries out the reaction L-homoserine + acetyl-CoA = O-acetyl-L-homoserine + CoA. It functions in the pathway amino-acid biosynthesis; L-methionine biosynthesis via de novo pathway; O-acetyl-L-homoserine from L-homoserine: step 1/1. Functionally, transfers an acetyl group from acetyl-CoA to L-homoserine, forming acetyl-L-homoserine. In Geobacillus kaustophilus (strain HTA426), this protein is Homoserine O-acetyltransferase.